A 956-amino-acid chain; its full sequence is MAM domain-containing glycosylphosphatidylinositol anchor protein 1 (956 aa).

Residues 1 to 18 (MEVTCLLLLALIPFHCRG) form the signal peptide. 2 Ig-like domains span residues 24–123 (PAQA…KSIR) and 132–230 (PVLT…KAIT). N-linked (GlcNAc...) asparagine glycosylation is present at Asn42. 2 disulfide bridges follow: Cys60/Cys108 and Cys157/Cys214. N-linked (GlcNAc...) asparagine glycosylation is found at Asn235, Asn247, Asn257, and Asn307. Ig-like domains are found at residues 240 to 323 (PALK…KTVN), 338 to 432 (PDMI…IEVN), 440 to 532 (PTIS…AQVQ), and 539 to 650 (PEVE…PTRS). Disulfide bonds link Cys262/Cys308 and Cys357/Cys415. Asn432 carries an N-linked (GlcNAc...) asparagine glycan. Cystine bridges form between Cys463/Cys514 and Cys560/Cys616. The 118-residue stretch at 627-744 (CLFQVSAKAY…SRIIHYTEPI (118 aa)) folds into the Fibronectin type-III domain. An MAM domain is found at 752–919 (NTCHFEDEKI…VTLKKGECPR (168 aa)). Positions 780 to 789 (LTQNPKRSPN) are enriched in polar residues. Positions 780 to 799 (LTQNPKRSPNTGPPTDISGT) are disordered. A lipid anchor (GPI-anchor amidated serine) is attached at Ser933. Positions 934-956 (GAPRLSSLQLWGSMAIFLLALQR) are cleaved as a propeptide — removed in mature form.

In terms of assembly, interacts heterophilically through its MAM domain with proteins in axon-rich regions and through its Ig-like domains with proteins in differentiating muscle. Interacts (through the Ig-like domains) with NLGN2. Expressed by neurons in layers 2 and 3 of the cortex during their migration and settling in the cortical plate. Also found in layers 4 and 6a. From 9.5 dpc-13.5 dpc, detected in the marginal zone of the developing cortex. At 16.5 dpc, modest expression is found in the intermediate zone. At postnatal day 1, evident in the superficial cortical plate. By postnatal day 7, expression is limited to layers 2 and 3 throughout most of the cortex.

The protein localises to the cell membrane. Its function is as follows. Required for radial migration of cortical neurons in the superficial layer of the neocortex. Plays a role in the formation or maintenance of inhibitory synapses. May function by inhibiting the activity of NLGN2. This chain is MAM domain-containing glycosylphosphatidylinositol anchor protein 1, found in Mus musculus (Mouse).